The primary structure comprises 358 residues: Probable butyrate kinase (358 aa).

It belongs to the acetokinase family.

It is found in the cytoplasm. The enzyme catalyses butanoate + ATP = butanoyl phosphate + ADP. This chain is Probable butyrate kinase, found in Oceanobacillus iheyensis (strain DSM 14371 / CIP 107618 / JCM 11309 / KCTC 3954 / HTE831).